The sequence spans 496 residues: Galactose/methyl galactoside import ATP-binding protein MglA (496 aa).

ABC transporter domains lie at 5–240 (LTIR…VGRT) and 243–496 (KRFP…ARYL). 37 to 44 (GENGAGKS) contacts ATP.

The protein belongs to the ABC transporter superfamily. Galactose/methyl galactoside importer (TC 3.A.1.2.3) family. In terms of assembly, the complex is composed of one ATP-binding protein (MglA), two transmembrane proteins (MglC) and a solute-binding protein (MglB).

The protein localises to the cell inner membrane. It carries out the reaction D-galactose(out) + ATP + H2O = D-galactose(in) + ADP + phosphate + H(+). The catalysed reaction is methyl beta-D-galactoside(out) + ATP + H2O = methyl beta-D-galactoside(in) + ADP + phosphate + H(+). In terms of biological role, part of the ABC transporter complex MglABC involved in galactose/methyl galactoside import. Responsible for energy coupling to the transport system. The polypeptide is Galactose/methyl galactoside import ATP-binding protein MglA (Treponema pallidum (strain Nichols)).